We begin with the raw amino-acid sequence, 659 residues long: Pentatricopeptide repeat-containing protein At3g26782, mitochondrial (659 aa).

The N-terminal 24 residues, 1 to 24 (MKVRSKKALFCSVSRLLHTERHTE), are a transit peptide targeting the mitochondrion. PPR repeat units follow at residues 40–74 (DVFSWNSVIADLARSGDSAEALLAFSSMRKLSLYP), 75–109 (TRSSFPCAIKACSSLFDIFSGKQTHQQAFVFGYQS), 110–144 (DIFVSSALIVMYSTCGKLEDARKVFDEIPKRNIVS), 145–171 (WTSMIRGYDLNGNALDAVSLFKDLLVD), 182–216 (DSMGLVSVISACSRVPAKGLTESIHSFVIKRGFDR), 217–249 (GVSVGNTLLDAYAKGGEGGVAVARKIFDQIVDK), 250–284 (DRVSYNSIMSVYAQSGMSNEAFEVFRRLVKNKVVT), 286–320 (NAITLSTVLLAVSHSGALRIGKCIHDQVIRMGLED), 321–351 (DVIVGTSIIDMYCKCGRVETARKAFDRMKNK), 352–386 (NVRSWTAMIAGYGMHGHAAKALELFPAMIDSGVRP), 387–422 (NYITFVSVLAACSHAGLHVEGWRWFNAMKGRFGVEP), and 423–453 (GLEHYGCMVDLLGRAGFLQKAYDLIQRMKMK). The interval 458–533 (IWSSLLAACR…PPGFSLLELN (76 aa)) is type E motif. Residues 534-564 (GEVHVFLIGDEEHPQREKIYEFLAELNRKLL) form a type E(+) motif region. The segment at 565–659 (EAGYVSNTSS…DGGCSCGDYW (95 aa)) is type DYW motif.

Belongs to the PPR family. PCMP-H subfamily.

The protein resides in the mitochondrion. This Arabidopsis thaliana (Mouse-ear cress) protein is Pentatricopeptide repeat-containing protein At3g26782, mitochondrial (PCMP-H34).